Reading from the N-terminus, the 423-residue chain is Glycine amidinotransferase, mitochondrial (423 aa).

The N-terminal 43 residues, 1–43 (MLRVRCLRGGSRGAEAVHYIGSRLGRTLTGWVQRTFQSTQAAT), are a transit peptide targeting the mitochondrion. Residues 43 to 63 (TASSRNSFAADDKATEPLPKD) are disordered. Residues serine 46 and serine 49 each carry the phosphoserine modification. Positions 52–61 (ADDKATEPLP) are enriched in basic and acidic residues. Aspartate 170 contacts arginine. Active-site residues include aspartate 254 and histidine 303. Positions 305, 322, 354, and 355 each coordinate arginine. The residue at position 385 (lysine 385) is an N6-acetyllysine. Cysteine 407 functions as the Amidino-cysteine intermediate in the catalytic mechanism.

It belongs to the amidinotransferase family. In terms of assembly, homodimer.

It is found in the mitochondrion inner membrane. It carries out the reaction L-arginine + glycine = guanidinoacetate + L-ornithine. The catalysed reaction is 4-aminobutanoate + L-arginine = 4-guanidinobutanoate + L-ornithine. The enzyme catalyses beta-alanine + L-arginine = 3-guanidinopropanoate + L-ornithine. It catalyses the reaction taurine + L-arginine = taurocyamine + L-ornithine. It participates in amine and polyamine biosynthesis; creatine biosynthesis; creatine from L-arginine and glycine: step 1/2. Functionally, transamidinase that catalyzes the transfer of the amidino group of L-arginine onto the amino moiety of acceptor metabolites such as glycine, beta-alanine, gamma-aminobutyric acid (GABA) and taurine yielding the corresponding guanidine derivatives. Catalyzes the rate-limiting step of creatine biosynthesis, namely the transfer of the amidino group from L-arginine to glycine to generate guanidinoacetate, which is then methylated by GAMT to form creatine. Provides creatine as a source for ATP generation in tissues with high energy demands, in particular skeletal muscle, heart and brain. This chain is Glycine amidinotransferase, mitochondrial (GATM), found in Macaca fascicularis (Crab-eating macaque).